A 712-amino-acid chain; its full sequence is Zinc finger and BTB domain-containing protein 39 (712 aa).

In terms of domain architecture, BTB spans 30 to 96 (CDVTIVVGSR…VYTSELFTDL (67 aa)). 3 disordered regions span residues 129 to 162 (ARAKPLTSTSESHSGTLSCPSAEPAHPLGELRGG), 176 to 224 (SDAG…IPSM), and 236 to 260 (GIQTSTSSCQPYKVQSNGDFSKNSF). Polar residues predominate over residues 134-147 (LTSTSESHSGTLSC). A Glycyl lysine isopeptide (Lys-Gly) (interchain with G-Cter in SUMO2) cross-link involves residue Lys-183. The segment at 372-394 (GNCKVCETHFQDRNSRVTHVLSH) adopts a C2H2-type 1 zinc-finger fold. The C2H2-type 2; atypical zinc-finger motif lies at 400-422 (FSCDMCETKFFTQWQLTLHRRDG). Lys-439 participates in a covalent cross-link: Glycyl lysine isopeptide (Lys-Gly) (interchain with G-Cter in SUMO2). Residues 480–502 (QACSVCDQRHLNLCSLMWHTLSH) form a C2H2-type 3; atypical zinc finger. C2H2-type zinc fingers lie at residues 508–530 (FSCSVCANSFVDWHLLEKHMAVH), 538–560 (FHCRLCSQSFKSEAAYRYHVSQH), 605–627 (YSCKVCGKRFAHTSEFNYHRRIH), and 633–655 (YQCKVCHKFFRGRSTIKCHLKTH). The segment at 661 to 683 (YRCTVCGHYSSTLNLMSKHVGVH) adopts a C2H2-type 8; atypical zinc-finger fold.

This sequence belongs to the krueppel C2H2-type zinc-finger protein family.

The protein localises to the nucleus. In terms of biological role, may be involved in transcriptional regulation. The chain is Zinc finger and BTB domain-containing protein 39 (ZBTB39) from Homo sapiens (Human).